The sequence spans 345 residues: Phosphoribosylformylglycinamidine cyclo-ligase (345 aa).

The protein belongs to the AIR synthase family.

The protein localises to the cytoplasm. It catalyses the reaction 2-formamido-N(1)-(5-O-phospho-beta-D-ribosyl)acetamidine + ATP = 5-amino-1-(5-phospho-beta-D-ribosyl)imidazole + ADP + phosphate + H(+). It functions in the pathway purine metabolism; IMP biosynthesis via de novo pathway; 5-amino-1-(5-phospho-D-ribosyl)imidazole from N(2)-formyl-N(1)-(5-phospho-D-ribosyl)glycinamide: step 2/2. The protein is Phosphoribosylformylglycinamidine cyclo-ligase of Aeromonas salmonicida (strain A449).